The sequence spans 234 residues: Transcription factor UDT1 (234 aa).

The interval 1 to 51 is disordered; sequence MPRRARARGGGGGGGEEVKVEDDFIDSVLNFGGGGGGEEDGDDGEEEQQQQ. Residues 37 to 48 are compositionally biased toward acidic residues; sequence GEEDGDDGEEEQ. The segment at 61-74 is basic motif; degenerate; that stretch reads EFKSKNLEAERRRR. In terms of domain architecture, bHLH spans 61–110; the sequence is EFKSKNLEAERRRRGRLNGNIFALRAVVPKITKMSKEATLSDAIEHIKNL. Positions 75–110 are helix-loop-helix motif; it reads GRLNGNIFALRAVVPKITKMSKEATLSDAIEHIKNL.

The protein belongs to the bHLH protein family.

The protein resides in the nucleus. Functionally, transcription factor that plays a crucial role in tapetum development. Required for male fertility and pollen differentiation within the developing anther. Plays a major role in maintaining tapetum development, starting in early meiosis. Required for pollen mother cell meiosis. May regulate the anther-specific cysteine protease CP1 and lipid-transfer proteins C4 and C6. Required for anther development. Functions in parallel with GAMYB to regulate early anther development. Functions upstream of the transcription factor TDR and may positively regulate its transcription. In Oryza sativa subsp. japonica (Rice), this protein is Transcription factor UDT1.